Reading from the N-terminus, the 209-residue chain is Octanoyltransferase (209 aa).

A BPL/LPL catalytic domain is found at 30–209; sequence GEAPEAVYLV…LEVEFIKIFK (180 aa). Substrate contacts are provided by residues 69–76, 143–145, and 156–158; these read RGGKFTFH, AIG, and GIA. Catalysis depends on Cys174, which acts as the Acyl-thioester intermediate.

The protein belongs to the LipB family.

The protein localises to the cytoplasm. It catalyses the reaction octanoyl-[ACP] + L-lysyl-[protein] = N(6)-octanoyl-L-lysyl-[protein] + holo-[ACP] + H(+). It participates in protein modification; protein lipoylation via endogenous pathway; protein N(6)-(lipoyl)lysine from octanoyl-[acyl-carrier-protein]: step 1/2. Catalyzes the transfer of endogenously produced octanoic acid from octanoyl-acyl-carrier-protein onto the lipoyl domains of lipoate-dependent enzymes. Lipoyl-ACP can also act as a substrate although octanoyl-ACP is likely to be the physiological substrate. The protein is Octanoyltransferase of Rickettsia bellii (strain OSU 85-389).